Consider the following 215-residue polypeptide: Large ribosomal subunit protein uL4 (215 aa).

The segment at 43-97 (RRQGTHSTKTRAEVSGGGKKPWRQKGTGRARAGSTRSPIWVGGGKTHTPKPRDYS) is disordered.

The protein belongs to the universal ribosomal protein uL4 family. As to quaternary structure, part of the 50S ribosomal subunit.

Functionally, one of the primary rRNA binding proteins, this protein initially binds near the 5'-end of the 23S rRNA. It is important during the early stages of 50S assembly. It makes multiple contacts with different domains of the 23S rRNA in the assembled 50S subunit and ribosome. Forms part of the polypeptide exit tunnel. In Brachyspira hyodysenteriae (strain ATCC 49526 / WA1), this protein is Large ribosomal subunit protein uL4.